A 198-amino-acid polypeptide reads, in one-letter code: Ribonuclease HII (198 aa).

The RNase H type-2 domain maps to 10-198 (QLVAGVDEVG…PVKRALGLAS (189 aa)). The a divalent metal cation site is built by D16, E17, and D108.

It belongs to the RNase HII family. The cofactor is Mn(2+). Requires Mg(2+) as cofactor.

It localises to the cytoplasm. The enzyme catalyses Endonucleolytic cleavage to 5'-phosphomonoester.. Endonuclease that specifically degrades the RNA of RNA-DNA hybrids. The protein is Ribonuclease HII of Escherichia coli O45:K1 (strain S88 / ExPEC).